The sequence spans 193 residues: Ion-translocating oxidoreductase complex subunit A (193 aa).

Transmembrane regions (helical) follow at residues 5–25 (LLLL…FLGL), 39–59 (VGMG…AYLV), 72–92 (LSTL…EMVI), 102–122 (ILGI…LALL), 134–154 (VVYG…FASL), and 170–190 (IAIG…FTGL).

This sequence belongs to the NqrDE/RnfAE family. As to quaternary structure, the complex is composed of six subunits: RnfA, RnfB, RnfC, RnfD, RnfE and RnfG.

Its subcellular location is the cell inner membrane. Part of a membrane-bound complex that couples electron transfer with translocation of ions across the membrane. The protein is Ion-translocating oxidoreductase complex subunit A of Tolumonas auensis (strain DSM 9187 / NBRC 110442 / TA 4).